The primary structure comprises 239 residues: 4-hydroxy-tetrahydrodipicolinate reductase (239 aa).

Residues 9 to 14 (GINGKM), 78 to 80 (GTT), and 104 to 107 (APNF) contribute to the NAD(+) site. Residue His-134 is the Proton donor/acceptor of the active site. His-135 contacts (S)-2,3,4,5-tetrahydrodipicolinate. Residue Lys-138 is the Proton donor of the active site. 144–145 (GT) lines the (S)-2,3,4,5-tetrahydrodipicolinate pocket.

Belongs to the DapB family.

Its subcellular location is the cytoplasm. It catalyses the reaction (S)-2,3,4,5-tetrahydrodipicolinate + NAD(+) + H2O = (2S,4S)-4-hydroxy-2,3,4,5-tetrahydrodipicolinate + NADH + H(+). The catalysed reaction is (S)-2,3,4,5-tetrahydrodipicolinate + NADP(+) + H2O = (2S,4S)-4-hydroxy-2,3,4,5-tetrahydrodipicolinate + NADPH + H(+). Its pathway is amino-acid biosynthesis; L-lysine biosynthesis via DAP pathway; (S)-tetrahydrodipicolinate from L-aspartate: step 4/4. In terms of biological role, catalyzes the conversion of 4-hydroxy-tetrahydrodipicolinate (HTPA) to tetrahydrodipicolinate. In Coxiella burnetii (strain Dugway 5J108-111), this protein is 4-hydroxy-tetrahydrodipicolinate reductase.